We begin with the raw amino-acid sequence, 449 residues long: MREILHIQGGQCGNQIGSKFWEVVCDEHGIDPTGRYVGNSDLQLERVNVYYNEASCGRYVPRAILMDLEPGTMDSVRTGPYGQIFRPDNFVFGQSGAGNNWAKGHYTEGAELIDAVLDVVRKEAENCDCLQGFQVCHSLGGGTGSGMGTLLISKIREEYPDRMMLTFSVFPSPKVSDTVVEPYNATLSVHQLVENADECMVLDNEALYDICFRTLKLTTPSFGDLNHLISATMSGVTCCLRFPGQLNSDLRKLAVNLIPFPRLHFFMVGFAPLTSRGSQQYRALTVPELTQQMWDSKNMMCAADPRHGRYLTASAMFRGKMSTKEVDEQMINVQNKNSSYFVEWIPNNVKSSVCDIAPRGLSMASTFIGNSTSIQEMFRRVSEQFTAMFRRKAFLHWYTGEGMDEMEFTEAESNMNDLVSEYQQYQDATADDEGEYEEDEDEEEILDHE.

The GTP site is built by Q11, E69, S138, G142, T143, G144, N204, and N226. A Mg(2+)-binding site is contributed by E69. The disordered stretch occupies residues 425–449 (YQDATADDEGEYEEDEDEEEILDHE). A compositionally biased stretch (acidic residues) spans 429–449 (TADDEGEYEEDEDEEEILDHE).

It belongs to the tubulin family. As to quaternary structure, dimer of alpha and beta chains. A typical microtubule is a hollow water-filled tube with an outer diameter of 25 nm and an inner diameter of 15 nM. Alpha-beta heterodimers associate head-to-tail to form protofilaments running lengthwise along the microtubule wall with the beta-tubulin subunit facing the microtubule plus end conferring a structural polarity. Microtubules usually have 13 protofilaments but different protofilament numbers can be found in some organisms and specialized cells. The cofactor is Mg(2+).

Its subcellular location is the cytoplasm. It is found in the cytoskeleton. Tubulin is the major constituent of microtubules, a cylinder consisting of laterally associated linear protofilaments composed of alpha- and beta-tubulin heterodimers. Microtubules grow by the addition of GTP-tubulin dimers to the microtubule end, where a stabilizing cap forms. Below the cap, tubulin dimers are in GDP-bound state, owing to GTPase activity of alpha-tubulin. The polypeptide is Tubulin beta-6 chain (TUBB6) (Arabidopsis thaliana (Mouse-ear cress)).